The following is a 510-amino-acid chain: Maturase K (510 aa).

The protein belongs to the intron maturase 2 family. MatK subfamily.

The protein localises to the plastid. It localises to the chloroplast. Its function is as follows. Usually encoded in the trnK tRNA gene intron. Probably assists in splicing its own and other chloroplast group II introns. In Populus nigra (Lombardy poplar), this protein is Maturase K.